We begin with the raw amino-acid sequence, 69 residues long: Mu-conotoxin-like Am3.3 (69 aa).

Positions 1-20 (MMSKLGVLLTICLLLFPLTA) are cleaved as a signal peptide. Positions 21-52 (VPLDGDQPADRPAERMQDDISSENHPMFDAIR) are excised as a propeptide. C68 is subject to Cysteine amide.

Belongs to the conotoxin M family. In terms of processing, is not hydroxylated. Post-translationally, contains 3 disulfide bonds. As to expression, expressed by the venom duct.

The protein localises to the secreted. In terms of biological role, mu-conotoxins block voltage-gated sodium channels (Nav). The polypeptide is Mu-conotoxin-like Am3.3 (Conus amadis (Amadis cone)).